Here is a 283-residue protein sequence, read N- to C-terminus: 5'-nucleotidase SurE (283 aa).

A divalent metal cation contacts are provided by aspartate 14, aspartate 15, serine 47, and asparagine 105.

Belongs to the SurE nucleotidase family. The cofactor is a divalent metal cation.

Its subcellular location is the cytoplasm. It carries out the reaction a ribonucleoside 5'-phosphate + H2O = a ribonucleoside + phosphate. In terms of biological role, nucleotidase that shows phosphatase activity on nucleoside 5'-monophosphates. This chain is 5'-nucleotidase SurE, found in Chlamydia trachomatis serovar D (strain ATCC VR-885 / DSM 19411 / UW-3/Cx).